The sequence spans 295 residues: UDP-N-acetylenolpyruvoylglucosamine reductase (295 aa).

Residues 23–188 form the FAD-binding PCMH-type domain; it reads KVGGPADFLA…ISAKFALKPG (166 aa). Arginine 167 is a catalytic residue. The active-site Proton donor is the serine 217. Glutamate 287 is an active-site residue.

Belongs to the MurB family. It depends on FAD as a cofactor.

It is found in the cytoplasm. The catalysed reaction is UDP-N-acetyl-alpha-D-muramate + NADP(+) = UDP-N-acetyl-3-O-(1-carboxyvinyl)-alpha-D-glucosamine + NADPH + H(+). The protein operates within cell wall biogenesis; peptidoglycan biosynthesis. In terms of biological role, cell wall formation. In Streptococcus pyogenes serotype M6 (strain ATCC BAA-946 / MGAS10394), this protein is UDP-N-acetylenolpyruvoylglucosamine reductase.